We begin with the raw amino-acid sequence, 247 residues long: Probable transcriptional regulatory protein PBPRA1113 (247 aa).

The protein belongs to the TACO1 family.

It is found in the cytoplasm. The sequence is that of Probable transcriptional regulatory protein PBPRA1113 from Photobacterium profundum (strain SS9).